Consider the following 275-residue polypeptide: Dermonecrotic toxin LamSicTox-alphaIV1i (275 aa).

The active site involves His5. Mg(2+) contacts are provided by Glu25 and Asp27. His41 (nucleophile) is an active-site residue. Intrachain disulfides connect Cys45/Cys51 and Cys47/Cys192. Asp85 contacts Mg(2+).

It belongs to the arthropod phospholipase D family. Class II subfamily. Mg(2+) serves as cofactor. Expressed by the venom gland.

The protein localises to the secreted. The enzyme catalyses an N-(acyl)-sphingosylphosphocholine = an N-(acyl)-sphingosyl-1,3-cyclic phosphate + choline. It catalyses the reaction an N-(acyl)-sphingosylphosphoethanolamine = an N-(acyl)-sphingosyl-1,3-cyclic phosphate + ethanolamine. It carries out the reaction a 1-acyl-sn-glycero-3-phosphocholine = a 1-acyl-sn-glycero-2,3-cyclic phosphate + choline. The catalysed reaction is a 1-acyl-sn-glycero-3-phosphoethanolamine = a 1-acyl-sn-glycero-2,3-cyclic phosphate + ethanolamine. In terms of biological role, dermonecrotic toxins cleave the phosphodiester linkage between the phosphate and headgroup of certain phospholipids (sphingolipid and lysolipid substrates), forming an alcohol (often choline) and a cyclic phosphate. This toxin acts on sphingomyelin (SM). It may also act on ceramide phosphoethanolamine (CPE), lysophosphatidylcholine (LPC) and lysophosphatidylethanolamine (LPE), but not on lysophosphatidylserine (LPS), and lysophosphatidylglycerol (LPG). It acts by transphosphatidylation, releasing exclusively cyclic phosphate products as second products. Induces dermonecrosis, hemolysis, increased vascular permeability, edema, inflammatory response, and platelet aggregation. This is Dermonecrotic toxin LamSicTox-alphaIV1i from Loxosceles amazonica (Recluse spider).